The chain runs to 216 residues: Flagellar transcriptional regulator FlhC (216 aa).

Cys137, Cys140, Cys157, and Cys160 together coordinate Zn(2+).

This sequence belongs to the FlhC family. In terms of assembly, heterohexamer composed of two FlhC and four FlhD subunits. Each FlhC binds a FlhD dimer, forming a heterotrimer, and a hexamer assembles by dimerization of two heterotrimers. It depends on Zn(2+) as a cofactor.

It localises to the cytoplasm. In terms of biological role, functions in complex with FlhD as a master transcriptional regulator that regulates transcription of several flagellar and non-flagellar operons by binding to their promoter region. Activates expression of class 2 flagellar genes, including fliA, which is a flagellum-specific sigma factor that turns on the class 3 genes. Also regulates genes whose products function in a variety of physiological pathways. In Paraburkholderia atlantica, this protein is Flagellar transcriptional regulator FlhC.